We begin with the raw amino-acid sequence, 100 residues long: Small ribosomal subunit protein uS14c (100 aa).

It belongs to the universal ribosomal protein uS14 family. Part of the 30S ribosomal subunit.

The protein localises to the plastid. Its subcellular location is the chloroplast. Functionally, binds 16S rRNA, required for the assembly of 30S particles. This is Small ribosomal subunit protein uS14c from Mesostigma viride (Green alga).